A 677-amino-acid chain; its full sequence is Zinc finger CCCH domain-containing protein 23 (677 aa).

The disordered stretch occupies residues 66 to 117; the sequence is PPQAASSSPTVPAAHSPFLLSRQNSGRCPAPSPSSWAQAQPFSRSNSMGNGG. Over residues 69–82 the composition is skewed to low complexity; sequence AASSSPTVPAAHSP. The segment covering 98-113 has biased composition (polar residues); it reads PSSWAQAQPFSRSNSM. The C3H1-type zinc-finger motif lies at 228 to 255; that stretch reads GFGWKPCLYYARGFCKNGSTCRFVHGGL. Residues 359–435 enclose the RRM domain; it reads RQIYLTFPAD…RVLVKPYKEK (77 aa). The stretch at 480–513 forms a coiled coil; that stretch reads ANELMLRRKLEEQQQAAELQQAIDLHSRRLIGLQ. The span at 535–562 shows a compositional bias: polar residues; that stretch reads TPITNAFTSGQPGATTIVESPPSSTGQL. The segment at 535–607 is disordered; the sequence is TPITNAFTSG…EHNLPDSPFA (73 aa). Basic and acidic residues predominate over residues 589–601; that stretch reads RNADSDQSGEHNL.

This chain is Zinc finger CCCH domain-containing protein 23, found in Oryza sativa subsp. japonica (Rice).